Here is a 97-residue protein sequence, read N- to C-terminus: Unclassified hydrophobin F (97 aa).

Residues 1 to 17 form the signal peptide; sequence MRVSALAFAAVLSLVSA. Intrachain disulfides connect Cys24-Cys75, Cys39-Cys67, Cys40-Cys58, and Cys76-Cys85.

The protein localises to the secreted. It is found in the cell wall. Aerial growth, conidiation, and dispersal of filamentous fungi in the environment rely upon a capability of their secreting small amphipathic proteins called hydrophobins (HPBs) with low sequence identity. Class I can self-assemble into an outermost layer of rodlet bundles on aerial cell surfaces, conferring cellular hydrophobicity that supports fungal growth, development and dispersal; whereas Class II form highly ordered films at water-air interfaces through intermolecular interactions but contribute nothing to the rodlet structure. In P.expansum, hydrophobins contribute to germination, tolerance to cold stress and mycotoxins patulin and citrinin production. HfbC, HfbD, HfbE, and HfbF have functional redundancy in fungal surface hydrophobicity. The protein is Unclassified hydrophobin F of Penicillium expansum (Blue mold rot fungus).